The primary structure comprises 471 residues: Putative multidrug resistance protein MdtD (471 aa).

At 1 to 11 (MTDLPDSTRWR) the chain is on the periplasmic side. Residues 12-32 (LWIVAFGFFMQSLDTTIVNTA) form a helical membrane-spanning segment. The Cytoplasmic portion of the chain corresponds to 33–48 (LPSMAQSLGESPLHMH). The chain crosses the membrane as a helical span at residues 49-69 (MVIVSYVLTVAVMLPASGWLA). The Periplasmic portion of the chain corresponds to 70-76 (DKVGVRN). The chain crosses the membrane as a helical span at residues 77–97 (IFFTAIVLFTLGSLFCALSGT). The Cytoplasmic portion of the chain corresponds to 98–101 (LNEL). The helical transmembrane segment at 102–124 (LLARALQGVGGAMMVPVGRLTVM) threads the bilayer. At 125-137 (KIVPREQYMAAMT) the chain is on the periplasmic side. The chain crosses the membrane as a helical span at residues 138–158 (FVTLPGQVGPLLGPALGGLLV). Residues 159 to 164 (EYASWH) are Cytoplasmic-facing. Residues 165–185 (WIFLINIPVGIIGAIATLMLM) traverse the membrane as a helical segment. Residues 186-196 (PNYTMQTRRFD) lie on the Periplasmic side of the membrane. A helical membrane pass occupies residues 197–217 (LSGFLLLAVGMAVLTLALDGS). Residues 218-224 (KGTGLSP) are Cytoplasmic-facing. A helical membrane pass occupies residues 225 to 245 (LAIAGLVAVGVVALVLYLLHA). Topologically, residues 246–262 (QNNNRALFSLKLFRTRT) are periplasmic. The helical transmembrane segment at 263–283 (FSLGLAGSFAGRIGSGMLPFM) threads the bilayer. Residues 284 to 285 (TP) are Cytoplasmic-facing. A helical membrane pass occupies residues 286 to 306 (VFLQIGLGFSPFHAGLMMIPM). Residues 307–341 (VLGSMGMKRIVVQVVNRFGYRRVLVATTLGLSLVT) are Periplasmic-facing. Residues 342–362 (LLFMTTALLGWYYVLPFVLFL) traverse the membrane as a helical segment. Over 363–395 (QGMVNSTRFSSMNTLTLKDLPDNLASSGNSLLS) the chain is Cytoplasmic. Residues 396–416 (MIMQLSMSIGVTIAGLLLGLF) traverse the membrane as a helical segment. Residues 417–430 (GSQHVSVDSGTTQT) are Periplasmic-facing. The chain crosses the membrane as a helical span at residues 431–451 (VFMYTWLSMASIIALPAFIFA). Over 452–471 (RVPNDTHQNVAISRRKRSAQ) the chain is Cytoplasmic.

This sequence belongs to the major facilitator superfamily. TCR/Tet family.

It localises to the cell inner membrane. In Escherichia coli O6:K15:H31 (strain 536 / UPEC), this protein is Putative multidrug resistance protein MdtD.